The chain runs to 403 residues: Aloesone synthase (403 aa).

Cysteine 174 is a catalytic residue. Residues serine 281 and 318–321 each bind CoA; that span reads GGRA.

This sequence belongs to the thiolase-like superfamily. Chalcone/stilbene synthases family. As to quaternary structure, homodimer.

The protein operates within secondary metabolite biosynthesis; flavonoid biosynthesis. Catalyzes the iterative condensations of 6, 7 or 8 molecules of malonyl-CoA to produce various aromatic polyketides. Produces the heptaketide aloesone, the aglycone of aloesin, from 7 molecules of malonyl-CoA as a major product. Also able to produce a hexaketide pyrone, a heptaketide 6-(2-acetyl-3,5-dihydroxybenzyl)-4-hydroxy-2-pyrone, a novel heptaketide 6-(2-(2,4-dihydroxy-6-methylphenyl)-2-oxoethyl)-4-hydroxy-2-pyrone and octaketides SEK4/SEK4b. The sequence is that of Aloesone synthase (PKS3) from Aloe arborescens (Kidachi aloe).